Reading from the N-terminus, the 565-residue chain is Urocanate hydratase (565 aa).

NAD(+) is bound by residues 61–62, glutamine 139, 185–187, glutamate 205, arginine 210, 251–252, 272–276, 282–283, and tyrosine 331; these read GG, GMG, NA, QTSAH, and YL. Cysteine 419 is an active-site residue. The segment at 453 to 472 is disordered; that stretch reads LDSGSVASPNRETESMRDGS. A compositionally biased stretch (basic and acidic residues) spans 463–472; the sequence is RETESMRDGS. Glycine 501 lines the NAD(+) pocket.

The protein belongs to the urocanase family. Requires NAD(+) as cofactor.

The protein localises to the cytoplasm. The enzyme catalyses 4-imidazolone-5-propanoate = trans-urocanate + H2O. Its pathway is amino-acid degradation; L-histidine degradation into L-glutamate; N-formimidoyl-L-glutamate from L-histidine: step 2/3. Functionally, catalyzes the conversion of urocanate to 4-imidazolone-5-propionate. The chain is Urocanate hydratase from Pseudomonas savastanoi pv. phaseolicola (strain 1448A / Race 6) (Pseudomonas syringae pv. phaseolicola (strain 1448A / Race 6)).